Reading from the N-terminus, the 324-residue chain is NADH-quinone oxidoreductase subunit H (324 aa).

The next 8 helical transmembrane spans lie at 11–31, 81–101, 114–134, 154–174, 186–206, 237–257, 264–284, and 304–324; these read ILITVGKAIVILLVVVTCGAF, VIFTLAPMIAFTSMLIAFAIV, IGILFFLMMAGLAVYAVLFAG, VSYEVFIGLSLMGVVAQAGSF, LWNVIPQFFGFITFAIAGVAV, FFVGEYIGIVTVSALMVTLFF, ILPPFVWFALKTGFFMMMFIL, and VCLPITLLNLLATAAVILYNA.

The protein belongs to the complex I subunit 1 family. In terms of assembly, NDH-1 is composed of 13 different subunits. Subunits NuoA, H, J, K, L, M, N constitute the membrane sector of the complex.

It localises to the cell inner membrane. The enzyme catalyses a quinone + NADH + 5 H(+)(in) = a quinol + NAD(+) + 4 H(+)(out). In terms of biological role, NDH-1 shuttles electrons from NADH, via FMN and iron-sulfur (Fe-S) centers, to quinones in the respiratory chain. The immediate electron acceptor for the enzyme in this species is believed to be ubiquinone. Couples the redox reaction to proton translocation (for every two electrons transferred, four hydrogen ions are translocated across the cytoplasmic membrane), and thus conserves the redox energy in a proton gradient. This subunit may bind ubiquinone. The sequence is that of NADH-quinone oxidoreductase subunit H from Pectobacterium carotovorum subsp. carotovorum (strain PC1).